We begin with the raw amino-acid sequence, 345 residues long: Hydroxymethylglutaryl-CoA synthase (345 aa).

Aspartate 28 contacts (3S)-3-hydroxy-3-methylglutaryl-CoA. The active-site Proton donor/acceptor is glutamate 80. Cysteine 112 and threonine 153 together coordinate (3S)-3-hydroxy-3-methylglutaryl-CoA. Cysteine 112 acts as the Acyl-thioester intermediate in catalysis. Arginine 199 contributes to the CoA binding site. (3S)-3-hydroxy-3-methylglutaryl-CoA-binding residues include threonine 201 and histidine 234. Histidine 234 serves as the catalytic Proton donor/acceptor. Lysine 239 contacts CoA. Arginine 243, asparagine 266, and serine 296 together coordinate (3S)-3-hydroxy-3-methylglutaryl-CoA.

It belongs to the thiolase-like superfamily. Archaeal HMG-CoA synthase family. As to quaternary structure, interacts with acetoacetyl-CoA thiolase that catalyzes the precedent step in the pathway and with a DUF35 protein. The acetoacetyl-CoA thiolase/HMG-CoA synthase complex channels the intermediate via a fused CoA-binding site, which allows for efficient coupling of the endergonic thiolase reaction with the exergonic HMGCS reaction.

The catalysed reaction is acetoacetyl-CoA + acetyl-CoA + H2O = (3S)-3-hydroxy-3-methylglutaryl-CoA + CoA + H(+). The protein operates within metabolic intermediate biosynthesis; (R)-mevalonate biosynthesis; (R)-mevalonate from acetyl-CoA: step 2/3. In terms of biological role, catalyzes the condensation of acetyl-CoA with acetoacetyl-CoA to form 3-hydroxy-3-methylglutaryl-CoA (HMG-CoA). Functions in the mevalonate (MVA) pathway leading to isopentenyl diphosphate (IPP), a key precursor for the biosynthesis of isoprenoid compounds that are building blocks of archaeal membrane lipids. The chain is Hydroxymethylglutaryl-CoA synthase from Methanocaldococcus jannaschii (strain ATCC 43067 / DSM 2661 / JAL-1 / JCM 10045 / NBRC 100440) (Methanococcus jannaschii).